Consider the following 398-residue polypeptide: Phosphoglycerate kinase (398 aa).

Substrate contacts are provided by residues 20-22 (DFN), Arg35, 58-61 (HLGK), Arg118, and Arg155. ATP-binding positions include Lys208, Gly296, Glu327, and 354-357 (GGDS).

The protein belongs to the phosphoglycerate kinase family. In terms of assembly, monomer.

It is found in the cytoplasm. It carries out the reaction (2R)-3-phosphoglycerate + ATP = (2R)-3-phospho-glyceroyl phosphate + ADP. The protein operates within carbohydrate degradation; glycolysis; pyruvate from D-glyceraldehyde 3-phosphate: step 2/5. This chain is Phosphoglycerate kinase, found in Fusobacterium nucleatum subsp. nucleatum (strain ATCC 25586 / DSM 15643 / BCRC 10681 / CIP 101130 / JCM 8532 / KCTC 2640 / LMG 13131 / VPI 4355).